The following is a 343-amino-acid chain: Protein RecA (343 aa).

64–71 is a binding site for ATP; that stretch reads GPESSGKT.

This sequence belongs to the RecA family.

It is found in the cytoplasm. In terms of biological role, can catalyze the hydrolysis of ATP in the presence of single-stranded DNA, the ATP-dependent uptake of single-stranded DNA by duplex DNA, and the ATP-dependent hybridization of homologous single-stranded DNAs. It interacts with LexA causing its activation and leading to its autocatalytic cleavage. The chain is Protein RecA from Bacillus thuringiensis (strain Al Hakam).